Here is a 449-residue protein sequence, read N- to C-terminus: Na(+)/H(+) antiporter NhaA 1 (449 aa).

The next 11 helical transmembrane spans lie at 38–58, 79–99, 117–137, 145–165, 175–195, 198–218, 240–260, 311–331, 347–367, 390–410, and 422–442; these read GILL…PWAA, FTIR…VVGM, VLPL…YAAF, AGWA…LTLV, VFLT…IALF, SGLH…LACL, MHHG…FMPA, FVHL…ALAN, PLPL…IFLF, GVAV…GLAF, and LGIL…LRFV.

This sequence belongs to the NhaA Na(+)/H(+) (TC 2.A.33) antiporter family.

The protein localises to the cell inner membrane. It carries out the reaction Na(+)(in) + 2 H(+)(out) = Na(+)(out) + 2 H(+)(in). Its function is as follows. Na(+)/H(+) antiporter that extrudes sodium in exchange for external protons. The polypeptide is Na(+)/H(+) antiporter NhaA 1 (Myxococcus xanthus (strain DK1622)).